Consider the following 874-residue polypeptide: Translation initiation factor IF-2 (874 aa).

A disordered region spans residues 1–262 (MEDKNKTIKE…EKSTSDRDFS (262 aa)). Residues 54–63 (SKPPVMPLPL) show a composition bias toward pro residues. The segment covering 83 to 104 (AKREESPGKQDAGRPPRDKDTR) has biased composition (basic and acidic residues). Positions 141–222 (SGGGYQGNRG…NRGPRSGGTG (82 aa)) are enriched in gly residues. A compositionally biased stretch (polar residues) spans 235–244 (LSQSRGSSVT). The span at 250–262 (HDKEKSTSDRDFS) shows a compositional bias: basic and acidic residues. The 170-residue stretch at 369–538 (NRPPVVTIMG…LLQAEVMDLK (170 aa)) folds into the tr-type G domain. Positions 378–385 (GHVDHGKT) are G1. 378 to 385 (GHVDHGKT) provides a ligand contact to GTP. Residues 403–407 (GITQH) are G2. Positions 424 to 427 (DTPG) are G3. GTP-binding positions include 424 to 428 (DTPGH) and 478 to 481 (NKID). The G4 stretch occupies residues 478–481 (NKID). Positions 514-516 (SAR) are G5.

This sequence belongs to the TRAFAC class translation factor GTPase superfamily. Classic translation factor GTPase family. IF-2 subfamily.

The protein resides in the cytoplasm. Functionally, one of the essential components for the initiation of protein synthesis. Protects formylmethionyl-tRNA from spontaneous hydrolysis and promotes its binding to the 30S ribosomal subunits. Also involved in the hydrolysis of GTP during the formation of the 70S ribosomal complex. This Leptospira interrogans serogroup Icterohaemorrhagiae serovar copenhageni (strain Fiocruz L1-130) protein is Translation initiation factor IF-2.